A 1157-amino-acid chain; its full sequence is Folliculin-interacting protein 1 (1157 aa).

Positions 37–467 constitute a uDENN FNIP1/2-type domain; that stretch reads FDPSQIRLIV…TVMPNGQPPI (431 aa). Disordered regions lie at residues 92 to 120, 616 to 665, 769 to 796, and 904 to 955; these read PGGDSSSSLDSSINSSSSFSDAKEQCPKY, SQQE…TKVE, SPPTAEEGVSADQNCEAKQTVEDQNRDC, and VPHG…NYYG. Residues 95-111 are compositionally biased toward low complexity; that stretch reads DSSSSLDSSINSSSSFS. In terms of domain architecture, cDENN FNIP1/2-type spans 475-1083; it reads SSQSVDMLAK…VSNLLHSTLQ (609 aa). The segment covering 651-664 has biased composition (basic and acidic residues); that stretch reads ADGHQPRTCQDTKV. A compositionally biased stretch (basic and acidic residues) spans 904 to 916; sequence VPHGDRENAEKKV. Residues 1093-1148 enclose the dDENN FNIP1/2-type domain; it reads FCVMHLEDRLQELYFKSKMLSEYLKGQMRVHVKELGVVLGIESSDLPLLAAVASTH.

This sequence belongs to the FNIP family. As to quaternary structure, homodimer and homomultimer. Heterodimer and heteromultimer with FNIP2. Component of the lysosomal folliculin complex (LFC).

The protein resides in the lysosome membrane. It is found in the cytoplasm. It localises to the cytosol. In terms of biological role, binding partner of the GTPase-activating protein FLCN: involved in the cellular response to amino acid availability by regulating the non-canonical mTORC1 signaling cascade controlling the MiT/TFE factors TFEB and TFE3. Required to promote FLCN recruitment to lysosomes and interaction with Rag GTPases, leading to activation of the non-canonical mTORC1 signaling. In low-amino acid conditions, component of the lysosomal folliculin complex (LFC) on the membrane of lysosomes, which inhibits the GTPase-activating activity of FLCN, thereby inactivating mTORC1 and promoting nuclear translocation of TFEB and TFE3. Upon amino acid restimulation, disassembly of the LFC complex liberates the GTPase-activating activity of FLCN, leading to activation of mTORC1 and subsequent inactivation of TFEB and TFE3. In addition to its role in mTORC1 signaling, also acts as a co-chaperone of HSP90AA1/Hsp90: inhibits the ATPase activity of HSP90AA1/Hsp90, leading to activate both kinase and non-kinase client proteins of HSP90AA1/Hsp90. Acts as a scaffold to load client protein FLCN onto HSP90AA1/Hsp90. The polypeptide is Folliculin-interacting protein 1 (Gallus gallus (Chicken)).